The sequence spans 494 residues: DnaJ homolog subfamily C member 7 (494 aa).

A2 bears the N-acetylalanine mark. 9 TPR repeats span residues 28–61, 62–95, 96–129, 142–175, 177–209, 210–243, 256–289, 294–327, and 328–361; these read AETF…CPKN, ASYY…DDSF, VRGH…DHKN, VMEY…APAC, RFKI…DSTN, ADAL…APDH, LKAK…DPNN, AKLY…DDTY, and IKAY…EKTK. Residues 381 to 451 form the J domain; the sequence is DYYKILGVDK…KKKTRYDSGQ (71 aa). S393 bears the Phosphoserine mark.

In terms of assembly, associates with complexes containing chaperones HSP70 and HSP90. Interacts with the GAP domain of NF1. Interacts with HSP90AA1. Interacts with HSPA1A/B; the interaction is enhanced by ATP. Interacts with HSP90AB1. Interacts with PGR. Interacts with RAD9A; the interaction is interrupted by UV and heat shock treatments. Interacts with HUS1 and RAD1. Interacts with NR1I3. The DNAJC7-NR1I3 complex may also include HSP90. Interacts with HSPA8.

The protein localises to the cytoplasm. It localises to the nucleus. Its subcellular location is the cytoskeleton. In terms of biological role, acts as a co-chaperone regulating the molecular chaperones HSP70 and HSP90 in folding of steroid receptors, such as the glucocorticoid receptor and the progesterone receptor. Proposed to act as a recycling chaperone by facilitating the return of chaperone substrates to early stages of chaperoning if further folding is required. In vitro, induces ATP-independent dissociation of HSP90 but not of HSP70 from the chaperone-substrate complexes. Recruits NR1I3 to the cytoplasm. This chain is DnaJ homolog subfamily C member 7 (DNAJC7), found in Homo sapiens (Human).